The following is a 174-amino-acid chain: Co-chaperone protein HscB homolog (174 aa).

The J domain maps to 2–74; that stretch reads NYFELFKFPP…IRRAEHMLSL (73 aa).

This sequence belongs to the HscB family. Interacts with HscA and stimulates its ATPase activity.

Co-chaperone involved in the maturation of iron-sulfur cluster-containing proteins. Seems to help targeting proteins to be folded toward HscA. This chain is Co-chaperone protein HscB homolog, found in Shewanella baltica (strain OS195).